The primary structure comprises 327 residues: rRNA 2'-O-methyltransferase fibrillarin (327 aa).

A disordered region spans residues 1–95 (MKPGFSPRGG…NQSGKNVMVE (95 aa)). Positions 7–80 (PRGGGFGGRG…GGNRGRGGGR (74 aa)) are enriched in gly residues. An asymmetric dimethylarginine mark is found at R8, R15, R21, R24, R28, and R31. Glycyl lysine isopeptide (Lys-Gly) (interchain with G-Cter in SUMO2) cross-links involve residues K90, K108, and K115. Position 108 is an N6-acetyllysine (K108). At S122 the chain carries Phosphoserine. An N6-acetyllysine modification is found at K127. Residues S130 and S132 each carry the phosphoserine modification. Residues K137, K149, and K164 each participate in a glycyl lysine isopeptide (Lys-Gly) (interchain with G-Cter in SUMO2) cross-link. Residues 178 to 179 (TT) and 197 to 198 (EF) contribute to the S-adenosyl-L-methionine site. Residues K211 and K212 each carry the N6-acetyllysine modification. Residues 222 to 223 (DA) and 242 to 245 (DVAQ) each bind S-adenosyl-L-methionine.

It belongs to the methyltransferase superfamily. Fibrillarin family. Component of box C/D small nucleolar ribonucleoprotein (snoRNP) particles that contain SNU13, FBL, NOP5 and NOP56, plus a guide RNA. It is associated with the U3, U8, U13, X and Y small nuclear RNAs. Component of several ribosomal and nucleolar protein complexes. Part of the small subunit (SSU) processome, composed of more than 70 proteins and the RNA chaperone small nucleolar RNA (snoRNA) U3. Interacts with PRMT5 and UTP20. Interacts with DDX5 and C1QBP. Interacts with NOL11. Interacts with PIH1D1. Interacts with RRP1B. Interacts with NOLC1. Interacts with SDE2. Interacts with NOP2 and NOP56. Post-translationally, by homology to other fibrillarins, some or all of the N-terminal domain arginines are modified to asymmetric dimethylarginine (DMA). In terms of processing, ubiquitinated. Ubiquitination leads to proteasomal degradation. Deubiquitinated by USP36. Acetylated by CREBBP/CBP, preventing methylation of 'Gln-105' of histone H2A (H2AQ104me), without affecting rRNA methylation. Deacetylation by SIRT7 restores methylation of 'Gln-105' of histone H2A (H2AQ104me).

It is found in the nucleus. It localises to the nucleolus. The protein resides in the nucleoplasm. It carries out the reaction L-glutaminyl-[histone H2A] + S-adenosyl-L-methionine = N(5)-methyl-L-glutaminyl-[histone H2A] + S-adenosyl-L-homocysteine + H(+). The catalysed reaction is a ribonucleotide in rRNA + S-adenosyl-L-methionine = a 2'-O-methylribonucleotide in rRNA + S-adenosyl-L-homocysteine + H(+). It catalyses the reaction a ribonucleotide in U6 snRNA + S-adenosyl-L-methionine = a 2'-O-methylribonucleotide in U6 snRNA + S-adenosyl-L-homocysteine + H(+). Its function is as follows. S-adenosyl-L-methionine-dependent methyltransferase that has the ability to methylate both RNAs and proteins. Involved in pre-rRNA processing by catalyzing the site-specific 2'-hydroxyl methylation of ribose moieties in pre-ribosomal RNA. Site specificity is provided by a guide RNA that base pairs with the substrate. Methylation occurs at a characteristic distance from the sequence involved in base pairing with the guide RNA. Probably catalyzes 2'-O-methylation of U6 snRNAs in box C/D RNP complexes. U6 snRNA 2'-O-methylation is required for mRNA splicing fidelity. Also acts as a protein methyltransferase by mediating methylation of 'Gln-105' of histone H2A (H2AQ104me), a modification that impairs binding of the FACT complex and is specifically present at 35S ribosomal DNA locus. Part of the small subunit (SSU) processome, first precursor of the small eukaryotic ribosomal subunit. During the assembly of the SSU processome in the nucleolus, many ribosome biogenesis factors, an RNA chaperone and ribosomal proteins associate with the nascent pre-rRNA and work in concert to generate RNA folding, modifications, rearrangements and cleavage as well as targeted degradation of pre-ribosomal RNA by the RNA exosome. The polypeptide is rRNA 2'-O-methyltransferase fibrillarin (Mus musculus (Mouse)).